The sequence spans 446 residues: Keratin, type I cytoskeletal 25 (446 aa).

The tract at residues 1-74 is head; it reads MSLRLSSGSR…VNEGGLLSGN (74 aa). Residues 75–110 are coil 1A; the sequence is EKVTMQNLNDRLASYLDNVQALQEANADLEQKIKGW. The region spanning 75 to 390 is the IF rod domain; it reads EKVTMQNLND…LLIGGDEGAC (316 aa). The tract at residues 111–132 is linker 1; sequence YEKFGPGSCRGLDHDYSRYFPI. The interval 133–224 is coil 1B; the sequence is IDDLKNQIIT…KNHKEEMQAL (92 aa). Residues 225 to 247 are linker 12; sequence QCAAGGNVNVEMNAAPGVDLTVL. The coil 2 stretch occupies residues 248–386; that stretch reads LNNMRAEYEA…ETYCLLIGGD (139 aa). The segment at 387 to 446 is tail; it reads EGACKSSSYKSKDYGSGNAGNQIKDPVKAIVVKKVLEEVDQRSKILTTRLHSLEEKSQSN. A Phosphoserine modification is found at Ser438.

Belongs to the intermediate filament family. In terms of assembly, heterodimer of a type I and a type II keratin. Heterodimer with type II keratin KRT5 leading to the formation of keratin intermediate filament (KIF) network. Interacts with KRT6A to form filaments.

It is found in the cytoplasm. In terms of biological role, essential for the proper assembly of type I and type II keratin protein complexes and formation of keratin intermediate filaments in the inner root sheath (irs). Plays a role in the cytoskeleton organization. This Mus musculus (Mouse) protein is Keratin, type I cytoskeletal 25.